We begin with the raw amino-acid sequence, 498 residues long: Mitogen-activated protein kinase 15 (498 aa).

The Protein kinase domain maps to 13-304; that stretch reads YKIEEVIGKG…AEEALADPYF (292 aa). ATP-binding positions include 19–27 and Lys42; that span reads IGKGSYGVV. Asp139 acts as the Proton acceptor in catalysis. Thr175 is subject to Phosphothreonine. A TXY motif is present at residues 175–177; it reads TDY. Tyr177 is modified (phosphotyrosine). Disordered regions lie at residues 388 to 411 and 470 to 498; these read STAAPPERQHNSLPRPSVLYSDDR and STAEQYEHRRTDRNPALATNTVSPRGSYP. A compositionally biased stretch (polar residues) spans 486–498; that stretch reads LATNTVSPRGSYP.

This sequence belongs to the protein kinase superfamily. CMGC Ser/Thr protein kinase family. MAP kinase subfamily. Post-translationally, dually phosphorylated on Thr-175 and Tyr-177, which activates the enzyme.

The catalysed reaction is L-seryl-[protein] + ATP = O-phospho-L-seryl-[protein] + ADP + H(+). It carries out the reaction L-threonyl-[protein] + ATP = O-phospho-L-threonyl-[protein] + ADP + H(+). With respect to regulation, activated by threonine and tyrosine phosphorylation. The sequence is that of Mitogen-activated protein kinase 15 (MPK15) from Oryza sativa subsp. japonica (Rice).